Here is a 121-residue protein sequence, read N- to C-terminus: Ribosome-binding factor A (121 aa).

It belongs to the RbfA family. Monomer. Binds 30S ribosomal subunits, but not 50S ribosomal subunits or 70S ribosomes.

The protein localises to the cytoplasm. One of several proteins that assist in the late maturation steps of the functional core of the 30S ribosomal subunit. Associates with free 30S ribosomal subunits (but not with 30S subunits that are part of 70S ribosomes or polysomes). Required for efficient processing of 16S rRNA. May interact with the 5'-terminal helix region of 16S rRNA. This Heliobacterium modesticaldum (strain ATCC 51547 / Ice1) protein is Ribosome-binding factor A.